A 451-amino-acid polypeptide reads, in one-letter code: Tryptophan--tRNA ligase (451 aa).

Residues 10 to 12 (TTT) and 18 to 19 (GN) contribute to the ATP site. The 'HIGH' region signature appears at 11 to 19 (TTGTPHLGN). Residue Asp143 coordinates L-tryptophan. ATP-binding positions include 155–157 (GRD), Leu195, and 202–206 (KMSKS). The 'KMSKS' region motif lies at 202–206 (KMSKS).

The protein belongs to the class-I aminoacyl-tRNA synthetase family. In terms of assembly, homodimer.

The protein localises to the cytoplasm. It catalyses the reaction tRNA(Trp) + L-tryptophan + ATP = L-tryptophyl-tRNA(Trp) + AMP + diphosphate + H(+). Its function is as follows. Catalyzes the attachment of tryptophan to tRNA(Trp). This chain is Tryptophan--tRNA ligase, found in Bordetella pertussis (strain Tohama I / ATCC BAA-589 / NCTC 13251).